Consider the following 227-residue polypeptide: MKFAVIVLPGSNCDIDMYHAVKDELGHEVEYVWHEETSLDGFDGVLIPGGFSYGDYLRCGAIARFANIMPAVKQAAAEGKPVLGVCNGFQILQELGLLPGAMRRNKDLKFICRPVELIVQNDETLFTASYEKGESITIPVAHGEGNFYCDDETLATLKENNQIAFTYGSNINGSVSDIAGVVNEKGNVLGMMPHPERAVDELLGSADGLKLFQSIVKNWRETHVTTA.

One can recognise a Glutamine amidotransferase type-1 domain in the interval 3–225; the sequence is FAVIVLPGSN…VKNWRETHVT (223 aa). The active-site Nucleophile is the Cys-86. Active-site residues include His-194 and Glu-196.

Part of the FGAM synthase complex composed of 1 PurL, 1 PurQ and 2 PurS subunits.

Its subcellular location is the cytoplasm. The catalysed reaction is N(2)-formyl-N(1)-(5-phospho-beta-D-ribosyl)glycinamide + L-glutamine + ATP + H2O = 2-formamido-N(1)-(5-O-phospho-beta-D-ribosyl)acetamidine + L-glutamate + ADP + phosphate + H(+). It carries out the reaction L-glutamine + H2O = L-glutamate + NH4(+). It functions in the pathway purine metabolism; IMP biosynthesis via de novo pathway; 5-amino-1-(5-phospho-D-ribosyl)imidazole from N(2)-formyl-N(1)-(5-phospho-D-ribosyl)glycinamide: step 1/2. Part of the phosphoribosylformylglycinamidine synthase complex involved in the purines biosynthetic pathway. Catalyzes the ATP-dependent conversion of formylglycinamide ribonucleotide (FGAR) and glutamine to yield formylglycinamidine ribonucleotide (FGAM) and glutamate. The FGAM synthase complex is composed of three subunits. PurQ produces an ammonia molecule by converting glutamine to glutamate. PurL transfers the ammonia molecule to FGAR to form FGAM in an ATP-dependent manner. PurS interacts with PurQ and PurL and is thought to assist in the transfer of the ammonia molecule from PurQ to PurL. The chain is Phosphoribosylformylglycinamidine synthase subunit PurQ from Bacillus subtilis (strain 168).